The sequence spans 200 residues: Phospholipase A2 inhibitor gamma subunit A (200 aa).

An N-terminal signal peptide occupies residues 1–19 (MKSLHTICLLFIFIARGNS). Intrachain disulfides connect Cys-22/Cys-46, Cys-25/Cys-32, Cys-39/Cys-67, Cys-73/Cys-94, Cys-95/Cys-100, Cys-118/Cys-143, Cys-136/Cys-165, and Cys-169/Cys-191. N-linked (GlcNAc...) asparagine glycosylation occurs at Asn-176.

This sequence belongs to the CNF-like-inhibitor family. Occurs as a mixture of oligomers. Tetrameric arrangement appears to be the predominant quaternary structure. As to expression, expressed by the liver.

Its subcellular location is the secreted. Functionally, inhibits the enzymatic activity of phospholipase A2 (PA2). The polypeptide is Phospholipase A2 inhibitor gamma subunit A (Gloydius brevicaudus siniticus (Chinese mamushi)).